Reading from the N-terminus, the 130-residue chain is Cystatin (130 aa).

The N-terminal stretch at Met-1–Ala-19 is a signal peptide. The short motif at Gln-67 to Gly-71 is the Secondary area of contact element. 2 disulfides stabilise this stretch: Cys-85/Cys-94 and Cys-108/Cys-128.

It belongs to the cystatin family.

It localises to the secreted. Its function is as follows. Cysteine proteinase inhibitor. This chain is Cystatin, found in Oncorhynchus mykiss (Rainbow trout).